A 1184-amino-acid chain; its full sequence is Non-receptor tyrosine-protein kinase TYK2 (1184 aa).

Residues 33–430 enclose the FERM domain; sequence LMVLLHWPGP…GYFRLTADSS (398 aa). A disordered region spans residues 294–368; sequence CYIQNSGQTA…KAGEHLTESP (75 aa). Tyr-295 carries the phosphotyrosine modification. Residues 449–529 enclose the SH2; atypical domain; sequence GIHGPLMDPF…GRSFASLGDL (81 aa). Phosphoserine is present on Ser-525. The 278-residue stretch at 589–866 folds into the Protein kinase 1 domain; it reads ITQLSHLGQG…RTILRDLTRL (278 aa). Tyr-604 bears the Phosphotyrosine mark. Residue Ser-881 is modified to Phosphoserine. The Protein kinase 2 domain maps to 894–1166; sequence LKKIRDLGEG…PTFQNLVPIL (273 aa). ATP contacts are provided by residues 900-908 and Lys-927; that span reads LGEGHFGKV. Asp-1020 functions as the Proton acceptor in the catalytic mechanism. A Phosphotyrosine; by autocatalysis modification is found at Tyr-1051. Position 1052 is a phosphotyrosine (Tyr-1052).

It belongs to the protein kinase superfamily. Tyr protein kinase family. JAK subfamily. As to quaternary structure, interacts (via FERM domain) with JAKMIP1. Interacts with PIK3R1; this interaction is important for cell migration. Interacts with MPL/TPOR. Post-translationally, phosphorylation by JAK1 at Tyr-1051 and Tyr-1052 induces kinase activation.

It carries out the reaction L-tyrosyl-[protein] + ATP = O-phospho-L-tyrosyl-[protein] + ADP + H(+). The protein kinase 1 domain (also termed pseudokinase domain) mediates autoinhibition of the TYK2 kinase domain. Its function is as follows. Tyrosine kinase of the non-receptor type involved in numerous cytokines and interferons signaling, which regulates cell growth, development, cell migration, innate and adaptive immunity. Plays both structural and catalytic roles in numerous interleukins and interferons (IFN-alpha/beta) signaling. Associates with heterodimeric cytokine receptor complexes and activates STAT family members including STAT1, STAT3, STAT4 or STAT6. The heterodimeric cytokine receptor complexes are composed of (1) a TYK2-associated receptor chain (IFNAR1, IL12RB1, IL10RB or IL13RA1), and (2) a second receptor chain associated either with JAK1 or JAK2. In response to cytokine-binding to receptors, phosphorylates and activates receptors (IFNAR1, IL12RB1, IL10RB or IL13RA1), creating docking sites for STAT members. In turn, recruited STATs are phosphorylated by TYK2 (or JAK1/JAK2 on the second receptor chain), form homo- and heterodimers, translocate to the nucleus, and regulate cytokine/growth factor responsive genes. Negatively regulates STAT3 activity by promototing phosphorylation at a specific tyrosine that differs from the site used for signaling. In Mus musculus (Mouse), this protein is Non-receptor tyrosine-protein kinase TYK2.